We begin with the raw amino-acid sequence, 160 residues long: Small ribosomal subunit protein uS7 (160 aa).

Belongs to the universal ribosomal protein uS7 family. In terms of assembly, part of the 30S ribosomal subunit. Contacts proteins S9 and S11.

In terms of biological role, one of the primary rRNA binding proteins, it binds directly to 16S rRNA where it nucleates assembly of the head domain of the 30S subunit. Is located at the subunit interface close to the decoding center, probably blocks exit of the E-site tRNA. In Rickettsia canadensis (strain McKiel), this protein is Small ribosomal subunit protein uS7.